Here is a 616-residue protein sequence, read N- to C-terminus: Dihydroxy-acid dehydratase (616 aa).

D81 contributes to the Mg(2+) binding site. Residue C122 participates in [2Fe-2S] cluster binding. Positions 123 and 124 each coordinate Mg(2+). The residue at position 124 (K124) is an N6-carboxylysine. C195 provides a ligand contact to [2Fe-2S] cluster. E491 is a Mg(2+) binding site. S517 (proton acceptor) is an active-site residue.

Belongs to the IlvD/Edd family. As to quaternary structure, homodimer. [2Fe-2S] cluster serves as cofactor. The cofactor is Mg(2+).

It carries out the reaction (2R)-2,3-dihydroxy-3-methylbutanoate = 3-methyl-2-oxobutanoate + H2O. The enzyme catalyses (2R,3R)-2,3-dihydroxy-3-methylpentanoate = (S)-3-methyl-2-oxopentanoate + H2O. It functions in the pathway amino-acid biosynthesis; L-isoleucine biosynthesis; L-isoleucine from 2-oxobutanoate: step 3/4. Its pathway is amino-acid biosynthesis; L-valine biosynthesis; L-valine from pyruvate: step 3/4. Functions in the biosynthesis of branched-chain amino acids. Catalyzes the dehydration of (2R,3R)-2,3-dihydroxy-3-methylpentanoate (2,3-dihydroxy-3-methylvalerate) into 2-oxo-3-methylpentanoate (2-oxo-3-methylvalerate) and of (2R)-2,3-dihydroxy-3-methylbutanoate (2,3-dihydroxyisovalerate) into 2-oxo-3-methylbutanoate (2-oxoisovalerate), the penultimate precursor to L-isoleucine and L-valine, respectively. This is Dihydroxy-acid dehydratase from Salmonella newport (strain SL254).